Reading from the N-terminus, the 249-residue chain is Octanoyltransferase (249 aa).

The disordered stretch occupies residues 1–23; the sequence is MVNSPQNPRQDQRQDLDLTSFSA. Residues 57–241 enclose the BPL/LPL catalytic domain; it reads GEAPELVWLL…AFEELFGPTR (185 aa). Substrate contacts are provided by residues 95-102, 170-172, and 183-185; these read RGGQLTYH, AIG, and GIA. The Acyl-thioester intermediate role is filled by Cys201.

This sequence belongs to the LipB family.

Its subcellular location is the cytoplasm. The enzyme catalyses octanoyl-[ACP] + L-lysyl-[protein] = N(6)-octanoyl-L-lysyl-[protein] + holo-[ACP] + H(+). It participates in protein modification; protein lipoylation via endogenous pathway; protein N(6)-(lipoyl)lysine from octanoyl-[acyl-carrier-protein]: step 1/2. Its function is as follows. Catalyzes the transfer of endogenously produced octanoic acid from octanoyl-acyl-carrier-protein onto the lipoyl domains of lipoate-dependent enzymes. Lipoyl-ACP can also act as a substrate although octanoyl-ACP is likely to be the physiological substrate. In Bradyrhizobium diazoefficiens (strain JCM 10833 / BCRC 13528 / IAM 13628 / NBRC 14792 / USDA 110), this protein is Octanoyltransferase.